A 148-amino-acid chain; its full sequence is MAQLKFNSILVVCTGNICRSPIGERLLRKRLPGVKVKSAGVHGLVKHPADATAADVAANHGVSLEGHAGRKLTAEMARNYDLILAMESEHIAQVTAIAPEVRGKTMLFGQWLEQKEIPDPYRKSQDAFEHVYGMLERASQEWAKRLSR.

Cys-13 serves as the catalytic Nucleophile. Residue Arg-19 is part of the active site. Catalysis depends on Asp-119, which acts as the Proton donor.

The protein belongs to the low molecular weight phosphotyrosine protein phosphatase family.

The enzyme catalyses O-phospho-L-tyrosyl-[protein] + H2O = L-tyrosyl-[protein] + phosphate. In terms of biological role, dephosphorylates etk. The protein is Low molecular weight protein-tyrosine-phosphatase Etp (etp) of Escherichia coli O157:H7.